A 334-amino-acid chain; its full sequence is Methionine adenosyltransferase 2 subunit beta (334 aa).

NADP(+) contacts are provided by residues 37-40 (TGLL), 60-62 (YSR), 71-72 (NL), C93, R97, Y159, and L185. The interval 319-334 (LWPFLVDKRWRQTVFH) is required for interaction with MAT2A.

Belongs to the dTDP-4-dehydrorhamnose reductase family. MAT2B subfamily. In terms of assembly, heterotrimer; composed of a catalytic mat2a homodimer that binds one regulatory mat2b chain. Heterohexamer; composed of a central, catalytic mat2a homotetramer flanked on either side by a regulatory mat2b chain. NADP binding increases the affinity for mat2a.

Its pathway is amino-acid biosynthesis; S-adenosyl-L-methionine biosynthesis; S-adenosyl-L-methionine from L-methionine: step 1/1. Regulatory subunit of S-adenosylmethionine synthetase 2, an enzyme that catalyzes the formation of S-adenosylmethionine from methionine and ATP. Regulates MAT2A catalytic activity by changing its kinetic properties, increasing its affinity for L-methionine. Can bind NADP (in vitro). In Xenopus tropicalis (Western clawed frog), this protein is Methionine adenosyltransferase 2 subunit beta (mat2b).